The following is a 468-amino-acid chain: Ribulose bisphosphate carboxylase large chain (468 aa).

Lys-5 is subject to N6,N6,N6-trimethyllysine. Positions 114 and 164 each coordinate substrate. Lys-166 functions as the Proton acceptor in the catalytic mechanism. Lys-168 is a binding site for substrate. Mg(2+) is bound by residues Lys-192, Asp-194, and Glu-195. Lys-192 is modified (N6-carboxylysine). Catalysis depends on His-285, which acts as the Proton acceptor. Substrate contacts are provided by Arg-286, His-318, and Ser-370.

The protein belongs to the RuBisCO large chain family. Type I subfamily. As to quaternary structure, heterohexadecamer of 8 large chains and 8 small chains; disulfide-linked. The disulfide link is formed within the large subunit homodimers. The cofactor is Mg(2+). In terms of processing, the disulfide bond which can form in the large chain dimeric partners within the hexadecamer appears to be associated with oxidative stress and protein turnover.

The protein localises to the plastid. It is found in the chloroplast. It catalyses the reaction 2 (2R)-3-phosphoglycerate + 2 H(+) = D-ribulose 1,5-bisphosphate + CO2 + H2O. The catalysed reaction is D-ribulose 1,5-bisphosphate + O2 = 2-phosphoglycolate + (2R)-3-phosphoglycerate + 2 H(+). In terms of biological role, ruBisCO catalyzes two reactions: the carboxylation of D-ribulose 1,5-bisphosphate, the primary event in carbon dioxide fixation, as well as the oxidative fragmentation of the pentose substrate in the photorespiration process. Both reactions occur simultaneously and in competition at the same active site. This is Ribulose bisphosphate carboxylase large chain from Datura stramonium (Jimsonweed).